The sequence spans 174 residues: Calcineurin subunit B (174 aa).

EF-hand domains follow at residues 21-56 (EEIE…ASNP), 60-88 (RLFS…FSVH), 90-125 (NKEE…MVGT), and 131-166 (QLQQ…SNVT). Residues Asp34, Asn36, Ser38, Ser40, Glu45, Asp66, Asp68, Asp72, Glu77, Asp103, Asp105, Asp107, Tyr109, Glu114, Asp144, Asp146, Asp148, Lys150, and Glu155 each coordinate Ca(2+).

The protein belongs to the calcineurin regulatory subunit family. As to quaternary structure, composed of a catalytic subunit (A) and a regulatory subunit (B).

In terms of biological role, regulatory subunit of calcineurin, a calcium-dependent, calmodulin stimulated protein phosphatase. Confers calcium sensitivity. This Schizosaccharomyces pombe (strain 972 / ATCC 24843) (Fission yeast) protein is Calcineurin subunit B (cnb1).